We begin with the raw amino-acid sequence, 86 residues long: Acyl carrier protein (86 aa).

Residues 7–85 (SKVDNIEQKV…DVVNYIKEHK (79 aa)) form the Carrier domain. Ser45 carries the O-(pantetheine 4'-phosphoryl)serine modification.

Belongs to the acyl carrier protein (ACP) family. 4'-phosphopantetheine is transferred from CoA to a specific serine of apo-ACP by AcpS. This modification is essential for activity because fatty acids are bound in thioester linkage to the sulfhydryl of the prosthetic group.

The protein resides in the cytoplasm. It functions in the pathway lipid metabolism; fatty acid biosynthesis. Functionally, carrier of the growing fatty acid chain in fatty acid biosynthesis. This is Acyl carrier protein from Rickettsia bellii (strain RML369-C).